The sequence spans 395 residues: Glutamate N-acetyltransferase (395 aa).

Positions 146, 169, 180, 263, 390, and 395 each coordinate substrate. Catalysis depends on Thr-180, which acts as the Nucleophile.

It belongs to the ArgJ family. As to quaternary structure, heterotetramer of two alpha and two beta chains.

Its subcellular location is the cytoplasm. The catalysed reaction is N(2)-acetyl-L-ornithine + L-glutamate = N-acetyl-L-glutamate + L-ornithine. The protein operates within amino-acid biosynthesis; L-arginine biosynthesis; L-ornithine and N-acetyl-L-glutamate from L-glutamate and N(2)-acetyl-L-ornithine (cyclic): step 1/1. In terms of biological role, catalyzes the transfer of the acetyl group from N(2)-acetylornithine to glutamate, forming N-acetylglutamate and L-ornithine. The polypeptide is Glutamate N-acetyltransferase (Methanosarcina acetivorans (strain ATCC 35395 / DSM 2834 / JCM 12185 / C2A)).